Consider the following 187-residue polypeptide: MVVLGVDPGSLKTGYGVVRQDSSGFSVLTCGVIRLHSGKSHAERIGQIYRELEEIINSTKPRRVALETVFLSKNAQSALKLGQVRGAVIALSMNTDLELHEYAPREVKSAVTGRGSASKEQVAFMVTRMLQVTGHITSYDVTDALGLALCDLLRIGNRAAQEPAQGISRGNKNWTGFVRAFPEMVVR.

Catalysis depends on residues aspartate 7, glutamate 67, and aspartate 140. The Mg(2+) site is built by aspartate 7, glutamate 67, and aspartate 140.

This sequence belongs to the RuvC family. As to quaternary structure, homodimer which binds Holliday junction (HJ) DNA. The HJ becomes 2-fold symmetrical on binding to RuvC with unstacked arms; it has a different conformation from HJ DNA in complex with RuvA. In the full resolvosome a probable DNA-RuvA(4)-RuvB(12)-RuvC(2) complex forms which resolves the HJ. The cofactor is Mg(2+).

The protein resides in the cytoplasm. It catalyses the reaction Endonucleolytic cleavage at a junction such as a reciprocal single-stranded crossover between two homologous DNA duplexes (Holliday junction).. In terms of biological role, the RuvA-RuvB-RuvC complex processes Holliday junction (HJ) DNA during genetic recombination and DNA repair. Endonuclease that resolves HJ intermediates. Cleaves cruciform DNA by making single-stranded nicks across the HJ at symmetrical positions within the homologous arms, yielding a 5'-phosphate and a 3'-hydroxyl group; requires a central core of homology in the junction. The consensus cleavage sequence is 5'-(A/T)TT(C/G)-3'. Cleavage occurs on the 3'-side of the TT dinucleotide at the point of strand exchange. HJ branch migration catalyzed by RuvA-RuvB allows RuvC to scan DNA until it finds its consensus sequence, where it cleaves and resolves the cruciform DNA. The chain is Crossover junction endodeoxyribonuclease RuvC from Chlorobium phaeobacteroides (strain DSM 266 / SMG 266 / 2430).